A 93-amino-acid polypeptide reads, in one-letter code: Small ribosomal subunit protein bS6 (93 aa).

It belongs to the bacterial ribosomal protein bS6 family.

Binds together with bS18 to 16S ribosomal RNA. This is Small ribosomal subunit protein bS6 from Treponema denticola (strain ATCC 35405 / DSM 14222 / CIP 103919 / JCM 8153 / KCTC 15104).